The following is a 90-amino-acid chain: Small ribosomal subunit protein bS16 (90 aa).

Belongs to the bacterial ribosomal protein bS16 family.

The protein is Small ribosomal subunit protein bS16 of Geobacillus sp. (strain WCH70).